The sequence spans 155 residues: Small ribosomal subunit protein uS7cz/uS7cy (155 aa).

It belongs to the universal ribosomal protein uS7 family. As to quaternary structure, part of the 30S ribosomal subunit.

The protein resides in the plastid. It is found in the chloroplast. Its function is as follows. One of the primary rRNA binding proteins, it binds directly to 16S rRNA where it nucleates assembly of the head domain of the 30S subunit. In Phaseolus vulgaris (Kidney bean), this protein is Small ribosomal subunit protein uS7cz/uS7cy (rps7-A).